The sequence spans 365 residues: 2-aminoethylphosphonate--pyruvate transaminase (365 aa).

Lys-194 is modified (N6-(pyridoxal phosphate)lysine).

This sequence belongs to the class-V pyridoxal-phosphate-dependent aminotransferase family. PhnW subfamily. As to quaternary structure, homodimer. Pyridoxal 5'-phosphate serves as cofactor.

It catalyses the reaction (2-aminoethyl)phosphonate + pyruvate = phosphonoacetaldehyde + L-alanine. In terms of biological role, involved in phosphonate degradation. The protein is 2-aminoethylphosphonate--pyruvate transaminase of Bacillus cereus (strain ZK / E33L).